Reading from the N-terminus, the 199-residue chain is FMN-dependent NADH:quinone oxidoreductase 1 (199 aa).

FMN-binding positions include Ser-10, 17 to 19, and 87 to 90; these read SNS and MYNF.

Belongs to the azoreductase type 1 family. In terms of assembly, homodimer. Requires FMN as cofactor.

The enzyme catalyses 2 a quinone + NADH + H(+) = 2 a 1,4-benzosemiquinone + NAD(+). It carries out the reaction N,N-dimethyl-1,4-phenylenediamine + anthranilate + 2 NAD(+) = 2-(4-dimethylaminophenyl)diazenylbenzoate + 2 NADH + 2 H(+). Its function is as follows. Quinone reductase that provides resistance to thiol-specific stress caused by electrophilic quinones. Also exhibits azoreductase activity. Catalyzes the reductive cleavage of the azo bond in aromatic azo compounds to the corresponding amines. The polypeptide is FMN-dependent NADH:quinone oxidoreductase 1 (Mesoplasma florum (strain ATCC 33453 / NBRC 100688 / NCTC 11704 / L1) (Acholeplasma florum)).